Here is a 408-residue protein sequence, read N- to C-terminus: tRNA-specific 2-thiouridylase MnmA (408 aa).

ATP-binding positions include 27-34 (AMSGGVDS) and Leu53. Cys121 (nucleophile) is an active-site residue. Cysteines 121 and 222 form a disulfide. Gly145 is an ATP binding site. The interval 172–174 (RDQ) is interaction with tRNA. The Cysteine persulfide intermediate role is filled by Cys222.

It belongs to the MnmA/TRMU family.

It is found in the cytoplasm. The catalysed reaction is S-sulfanyl-L-cysteinyl-[protein] + uridine(34) in tRNA + AH2 + ATP = 2-thiouridine(34) in tRNA + L-cysteinyl-[protein] + A + AMP + diphosphate + H(+). Functionally, catalyzes the 2-thiolation of uridine at the wobble position (U34) of tRNA, leading to the formation of s(2)U34. The protein is tRNA-specific 2-thiouridylase MnmA of Rhizobium etli (strain ATCC 51251 / DSM 11541 / JCM 21823 / NBRC 15573 / CFN 42).